Consider the following 91-residue polypeptide: Late embryogenis abundant protein 2 (91 aa).

The segment at 47–72 (KRAGEASSEKAPWVPDPKTGYYRPET) is disordered.

This sequence belongs to the LEA type 3 family.

The protein resides in the cytoplasm. It localises to the nucleus. This is Late embryogenis abundant protein 2 from Arabidopsis thaliana (Mouse-ear cress).